A 166-amino-acid chain; its full sequence is Probable calcium-binding protein CML17 (166 aa).

4 EF-hand domains span residues 12-47 (EQINELREIFRSFDRNKDGSLTQLELGSLLRALGVK), 48-83 (PSPDQFETLIDKADTKSNGLVEFPEFVALVSPELLS), 91-126 (YTEEQLLRLFRIFDTDGNGFITAAELAHSMAKLGHA), and 127-162 (LTVAELTGMIKEADSDGDGRINFQEFAKAINSAAFD). Residues Asp-25, Asn-27, Asp-29, Ser-31, and Glu-36 each coordinate Ca(2+). Ca(2+)-binding residues include Asp-104, Asp-106, Asn-108, Glu-115, Asp-140, Asp-142, Asp-144, Arg-146, and Glu-151.

Its function is as follows. Potential calcium sensor. The sequence is that of Probable calcium-binding protein CML17 (CML17) from Arabidopsis thaliana (Mouse-ear cress).